The chain runs to 378 residues: GTP 3',8-cyclase 3 (378 aa).

In terms of domain architecture, Radical SAM core spans 40 to 259 (RCGRTMGDLR…STLGKKYGPI (220 aa)). Arg49 provides a ligand contact to GTP. Positions 56 and 60 each coordinate [4Fe-4S] cluster. Tyr62 lines the S-adenosyl-L-methionine pocket. Cys63 contributes to the [4Fe-4S] cluster binding site. GTP is bound at residue Arg99. An S-adenosyl-L-methionine-binding site is contributed by Gly103. Thr134 provides a ligand contact to GTP. Ser158 serves as a coordination point for S-adenosyl-L-methionine. Lys195 lines the GTP pocket. Met229 serves as a coordination point for S-adenosyl-L-methionine. Residues Cys292 and Cys295 each coordinate [4Fe-4S] cluster. A GTP-binding site is contributed by 297 to 299 (RSR). Residue Cys309 participates in [4Fe-4S] cluster binding.

Belongs to the radical SAM superfamily. MoaA family. Monomer and homodimer. The cofactor is [4Fe-4S] cluster.

The enzyme catalyses GTP + AH2 + S-adenosyl-L-methionine = (8S)-3',8-cyclo-7,8-dihydroguanosine 5'-triphosphate + 5'-deoxyadenosine + L-methionine + A + H(+). Its pathway is cofactor biosynthesis; molybdopterin biosynthesis. Its function is as follows. Catalyzes the cyclization of GTP to (8S)-3',8-cyclo-7,8-dihydroguanosine 5'-triphosphate. In Mycobacterium bovis (strain ATCC BAA-935 / AF2122/97), this protein is GTP 3',8-cyclase 3.